A 288-amino-acid polypeptide reads, in one-letter code: Polyamine aminopropyltransferase (288 aa).

The 230-residue stretch at 9-238 (ETLHDQFGQY…GIMTFAWATD (230 aa)) folds into the PABS domain. Glutamine 33 lines the S-methyl-5'-thioadenosine pocket. Spermidine-binding residues include histidine 64 and aspartate 88. Residues glutamate 108 and 140–141 (DG) each bind S-methyl-5'-thioadenosine. Aspartate 158 acts as the Proton acceptor in catalysis. 158–161 (DCTD) serves as a coordination point for spermidine. Proline 165 provides a ligand contact to S-methyl-5'-thioadenosine.

This sequence belongs to the spermidine/spermine synthase family. As to quaternary structure, homodimer or homotetramer.

The protein resides in the cytoplasm. It carries out the reaction S-adenosyl 3-(methylsulfanyl)propylamine + putrescine = S-methyl-5'-thioadenosine + spermidine + H(+). Its pathway is amine and polyamine biosynthesis; spermidine biosynthesis; spermidine from putrescine: step 1/1. Catalyzes the irreversible transfer of a propylamine group from the amino donor S-adenosylmethioninamine (decarboxy-AdoMet) to putrescine (1,4-diaminobutane) to yield spermidine. This is Polyamine aminopropyltransferase from Escherichia fergusonii (strain ATCC 35469 / DSM 13698 / CCUG 18766 / IAM 14443 / JCM 21226 / LMG 7866 / NBRC 102419 / NCTC 12128 / CDC 0568-73).